The chain runs to 1375 residues: DNA-directed RNA polymerase subunit beta' (1375 aa).

The segment at 1-158 is unknown; the sequence is MAKNEVLSLP…RVNKIIQPIR (158 aa). The interval 159–1353 is DNA-directed RNA polymerase subunit beta'; that stretch reads KTYGSKAFTH…GGLIPAGTGI (1195 aa). The Zn(2+) site is built by cysteine 219, cysteine 221, cysteine 233, and cysteine 236. 3 residues coordinate Mg(2+): aspartate 607, aspartate 609, and aspartate 611.

The protein belongs to the RNA polymerase beta' chain family. As to quaternary structure, the RNAP catalytic core consists of 2 alpha, 1 beta, 1 beta' and 1 omega subunit. When a sigma factor is associated with the core the holoenzyme is formed, which can initiate transcription. Mg(2+) serves as cofactor. Zn(2+) is required as a cofactor.

The catalysed reaction is RNA(n) + a ribonucleoside 5'-triphosphate = RNA(n+1) + diphosphate. Its function is as follows. DNA-dependent RNA polymerase catalyzes the transcription of DNA into RNA using the four ribonucleoside triphosphates as substrates. The polypeptide is DNA-directed RNA polymerase subunit beta' (Acholeplasma laidlawii (strain PG-8A)).